We begin with the raw amino-acid sequence, 119 residues long: Small ribosomal subunit protein uS13 (119 aa).

The disordered stretch occupies residues 93–119 (RRGLPLRGQRTRSNARTRKGKRKPIRS).

It belongs to the universal ribosomal protein uS13 family. As to quaternary structure, part of the 30S ribosomal subunit. Forms a loose heterodimer with protein S19. Forms two bridges to the 50S subunit in the 70S ribosome.

In terms of biological role, located at the top of the head of the 30S subunit, it contacts several helices of the 16S rRNA. In the 70S ribosome it contacts the 23S rRNA (bridge B1a) and protein L5 of the 50S subunit (bridge B1b), connecting the 2 subunits; these bridges are implicated in subunit movement. Contacts the tRNAs in the A and P-sites. This chain is Small ribosomal subunit protein uS13, found in Coxiella burnetii (strain RSA 493 / Nine Mile phase I).